We begin with the raw amino-acid sequence, 268 residues long: Proliferating cell nuclear antigen (268 aa).

Residues 61–80 mediate DNA binding; that stretch reads RCDRNPSMGMNLNNMAKMLK.

The protein belongs to the PCNA family.

It is found in the nucleus. This protein is an auxiliary protein of DNA polymerase delta and is involved in the control of eukaryotic DNA replication by increasing the polymerase's processibility during elongation of the leading strand. In Catharanthus roseus (Madagascar periwinkle), this protein is Proliferating cell nuclear antigen.